Here is a 433-residue protein sequence, read N- to C-terminus: GPI mannosyltransferase 2 (433 aa).

Transmembrane regions (helical) follow at residues 4–24 (LVKP…IISL), 109–129 (TAVI…FYLT), 148–165 (ATFT…GFFT), 172–194 (LSFL…IIPY), 204–226 (FYYT…NCIL), 247–267 (ALLF…RQQF), 322–342 (IPNF…TFYF), 354–374 (LIFI…VQII), and 410–430 (GYIY…VFFL).

This sequence belongs to the PIGV family.

It is found in the endoplasmic reticulum membrane. It functions in the pathway glycolipid biosynthesis; glycosylphosphatidylinositol-anchor biosynthesis. In terms of biological role, mannosyltransferase involved in glycosylphosphatidylinositol-anchor biosynthesis. Transfers the second mannose to the glycosylphosphatidylinositol during GPI precursor assembly. The polypeptide is GPI mannosyltransferase 2 (GPI18) (Candida glabrata (strain ATCC 2001 / BCRC 20586 / JCM 3761 / NBRC 0622 / NRRL Y-65 / CBS 138) (Yeast)).